A 575-amino-acid chain; its full sequence is Septation ring formation regulator EzrA (575 aa).

Topologically, residues 1–8 (MSNGQLIY) are extracellular. The helical transmembrane segment at 9–27 (LMVAIAVILVLAYVVAIFL) threads the bilayer. Residues 28–575 (RKRNEGRLEA…YEKTRETIRF (548 aa)) lie on the Cytoplasmic side of the membrane. 4 coiled-coil regions span residues 105-191 (LKAS…FVTL), 265-301 (LYEA…LYDI), 354-416 (VRRI…IEKD), and 456-526 (TASN…IQEA).

This sequence belongs to the EzrA family.

Its subcellular location is the cell membrane. Negative regulator of FtsZ ring formation; modulates the frequency and position of FtsZ ring formation. Inhibits FtsZ ring formation at polar sites. Interacts either with FtsZ or with one of its binding partners to promote depolymerization. This chain is Septation ring formation regulator EzrA, found in Streptococcus pneumoniae (strain ATCC BAA-255 / R6).